Reading from the N-terminus, the 351-residue chain is Phosphatidylinositol transfer protein PDR16 (351 aa).

One can recognise a CRAL-TRIO domain in the interval 135–295 (LVAVENESGK…LYGGDLKFKY (161 aa)).

In terms of assembly, homodimer. Apo-SFH3 forms a dimer through the hydrophobic interaction of gating helices. Binding of phosphatidylinositol leads to dissociation of the dimer into monomers in a reversible manner.

It localises to the lipid droplet. Its subcellular location is the microsome membrane. It is found in the endoplasmic reticulum membrane. The catalysed reaction is a 1,2-diacyl-sn-glycero-3-phospho-(1D-myo-inositol)(in) = a 1,2-diacyl-sn-glycero-3-phospho-(1D-myo-inositol)(out). Functionally, has phosphatidylinositol transfer activity. Involved in the regulation of the phospholipid composition of plasma- and endomembranes. Altering plasma membrane composition may provide a possible mechanism for multidrug resistance. Involved in the regulation of sterol biosynthesis. Contributes to efficient phospholipase D1 activation in the regulation of phospholipid turnover. Regulates the release of fatty acids from lipid droplets. The polypeptide is Phosphatidylinositol transfer protein PDR16 (PDR16) (Saccharomyces cerevisiae (strain ATCC 204508 / S288c) (Baker's yeast)).